A 156-amino-acid polypeptide reads, in one-letter code: D-aminoacyl-tRNA deacylase (156 aa).

A Gly-cisPro motif, important for rejection of L-amino acids motif is present at residues 137–138 (GP).

The protein belongs to the DTD family. As to quaternary structure, homodimer.

The protein localises to the cytoplasm. It catalyses the reaction glycyl-tRNA(Ala) + H2O = tRNA(Ala) + glycine + H(+). The enzyme catalyses a D-aminoacyl-tRNA + H2O = a tRNA + a D-alpha-amino acid + H(+). Functionally, an aminoacyl-tRNA editing enzyme that deacylates mischarged D-aminoacyl-tRNAs. Also deacylates mischarged glycyl-tRNA(Ala), protecting cells against glycine mischarging by AlaRS. Acts via tRNA-based rather than protein-based catalysis; rejects L-amino acids rather than detecting D-amino acids in the active site. By recycling D-aminoacyl-tRNA to D-amino acids and free tRNA molecules, this enzyme counteracts the toxicity associated with the formation of D-aminoacyl-tRNA entities in vivo and helps enforce protein L-homochirality. The polypeptide is D-aminoacyl-tRNA deacylase (Ruegeria sp. (strain TM1040) (Silicibacter sp.)).